The following is a 120-amino-acid chain: uncharacterized protein (120 aa).

The disordered stretch occupies residues 80–99 (PTRKLQTPLNEPPRTWRKTA).

This is an uncharacterized protein from Goose circovirus (GoCV).